The primary structure comprises 342 residues: Cathepsin B-like cysteine proteinase (342 aa).

An N-terminal signal peptide occupies residues 1–17 (MLKIAVYIVSLFTFLEA). A propeptide spans 18–89 (HVTTRNNQRI…TVDHHDLNVE (72 aa)) (activation peptide). 6 disulfides stabilise this stretch: C103/C132, C115/C159, C151/C217, C152/C155, C188/C221, and C196/C207. The active site involves C118. Active-site residues include H288 and N308.

The protein belongs to the peptidase C1 family. As to expression, intestine (gut).

Thiol protease. Has a role as a digestive enzyme. In Schistosoma japonicum (Blood fluke), this protein is Cathepsin B-like cysteine proteinase (CATB).